The chain runs to 396 residues: Acetate kinase (396 aa).

Asparagine 7 contacts Mg(2+). ATP is bound at residue lysine 14. Arginine 86 provides a ligand contact to substrate. Aspartate 143 acts as the Proton donor/acceptor in catalysis. Residues 203–207 (HLGNG), 277–279 (DMR), and 325–329 (GIGEH) each bind ATP. Glutamate 380 serves as a coordination point for Mg(2+).

The protein belongs to the acetokinase family. As to quaternary structure, homodimer. Mg(2+) serves as cofactor. Requires Mn(2+) as cofactor.

The protein localises to the cytoplasm. The catalysed reaction is acetate + ATP = acetyl phosphate + ADP. It functions in the pathway metabolic intermediate biosynthesis; acetyl-CoA biosynthesis; acetyl-CoA from acetate: step 1/2. Functionally, catalyzes the formation of acetyl phosphate from acetate and ATP. Can also catalyze the reverse reaction. In Sulfurovum sp. (strain NBC37-1), this protein is Acetate kinase.